The chain runs to 400 residues: WD repeat and FYVE domain-containing protein 2 (400 aa).

WD repeat units lie at residues 22–61, 66–105, 112–150, 153–192, 197–236, and 240–279; these read GSQE…QYWP, AMPS…NKMT, AHQS…QRLG, RTSA…CTLV, GHTG…GTAI, and GHND…QETP. An FYVE-type zinc finger spans residues 281–352; the sequence is WLDSDSCQKC…VCDSCHEAIT (72 aa). 8 residues coordinate Zn(2+): C287, C290, C314, C317, C322, C325, C344, and C347. The stretch at 364–399 is one WD 7 repeat; it reads DSKHNIVHVHFDATRGWLLTSGTDKVIKLWDMTPVV.

As to quaternary structure, homodimer. Interacts (via WD repeats 1-3) with AKT1, AKT2, PRKCZ and PRKCI. Interacts with VAMP2. Forms a complex with VAMP2 and PRKCZ. Interacts with FOXO1. Forms a complex with AKT1 and FOXO1.

It localises to the endosome. Its subcellular location is the early endosome. The protein resides in the cytoplasm. Its function is as follows. Acts in an adapter protein-like fashion to mediate the interaction between the kinase PRKCZ and its substrate VAMP2 and increases the PRKCZ-dependent phosphorylation of VAMP2. Positively regulates adipocyte differentiation, by facilitating the phosphorylation and thus inactivation of the anti-adipogenetic transcription factor FOXO1 by the kinase AKT1. Plays a role in endosomal control of AKT2 signaling; required for insulin-stimulated AKT2 phosphorylation and glucose uptake and insulin-stimulated phosphorylation of AKT2 substrates. Participates in transferrin receptor endocytosis. The sequence is that of WD repeat and FYVE domain-containing protein 2 (WDFY2) from Homo sapiens (Human).